The following is a 1255-amino-acid chain: MKGNRNPPPPPSGPVPPSPTSKNTAKYTNKDGSKFITVPKMNTPIDSAQPSPTASSLAAKPALPPGPETEPPQTVNRKKQKRRAKAAAKAAAERAQNSPAINGLPSPSPTNDQQSADADPEDDEDEPGTGHDSGNQSLYLNGGAHGGAPGKSKKSKKKKKKNATGPAGGFPNNNPYAQDDRDHSPEPILPPPPPQQNRPGMSREKIWNTNSQEERERIKEFWLGLSEAERKSLVKVEKDAVLKKMKEQQKHTCSCTVCGRKRTAIEEELEGLYDAYYEELEQYANHPNQGEGPPMLRPRRSFGSMGGMRPRGLHSRFSNHQPSRGRIVDELEGDEEEEEVEAEAEDDGEGDEEGEDVYSEDELEDDMYSEEEQEPSEELHRSDYAADFFNFGNSLTVQGRDRLPILPSFLQNYPFSGTGNNAYGSSSLGGILTVADDLLKNDGKKFIEMMEQLAERRMAREEDARGQFERAYDHPNGERYVHSHPPPPDEEEFEDEEEEYEEDDEEEYNSPDEEDTMTEEQRMEEGRRMFQIFAARMFEQRVLTAYREKVAKERQAKLLEEIEAENQQDAQRKAKKAKDAQRRKDRAAKKKEAQAEEKARREAEKAAEEAARRAEEARKAEEQRAKAEEKRKKKEAQRKAEEEERQRKEAERLRKIQDREEAERKAREAREREKKTREEARLREKEAREQKERKDRERREQQERERREKEAKAKAEREAKEAKEAKEAKEGKDTKERRKKEERAAHKAAALAPAIPVPITLPKRSATQQPPAPPVAPVPVLPQQSTSYASPKVPVATPALPKAPTPMRARQTSQQDGSTASSGAASNSGSMASQNPSPHPITPVHASPGLMAPPSKSGVMGIGSQGSAQPPSHSASPMSFPAKLLPPQHSPFGIPPMGSAMSYPPPGLSQMPLGFANPLHREPLFPPMPGFRPASGMMPMPPGLNGPGVNRGFPLHPPPGFLGGPMESPAPSMAQAMSPGLQRDNQSPHSRQGSGSFDPSQPISRPTPIGRPASVVQGQRPSNWSPSSGPPKPEPEAHLGSRALLDDLDDGPQDFPGRLSRGGSAPGPRPAPGFPMPPFGMDPMFSHNPWAPPGVVQPNLFGPHPPPSFSPLSAHTPMGMPWGHAMPSASTFGTPGAVDRPIEPRSVAVRKMLRRACEDLANAGSAEGRDSFIPLEMIKVQVENFNHGYPIDEKDLLDICETEGNEVNGGGSFDVVNDGQGGRSIRFVSGDQRTAPQPVQLAVGYNPGSPIGGGR.

The span at 1-19 shows a compositional bias: pro residues; sequence MKGNRNPPPPPSGPVPPSP. Disordered stretches follow at residues 1–214, 285–379, 470–525, 563–898, and 956–1080; these read MKGN…SQEE, NHPN…SEEL, RAYD…RMEE, EAEN…PPMG, and HPPP…PPFG. The span at 50–61 shows a compositional bias: low complexity; sequence PSPTASSLAAKP. Basic residues predominate over residues 76 to 86; sequence NRKKQKRRAKA. Residues 87-96 show a composition bias toward low complexity; sequence AAKAAAERAQ. Positions 118 to 127 are enriched in acidic residues; that stretch reads ADPEDDEDEP. Residues 151 to 162 are compositionally biased toward basic residues; it reads KSKKSKKKKKKN. Over residues 187-196 the composition is skewed to pro residues; that stretch reads PILPPPPPQQ. The segment covering 201-214 has biased composition (basic and acidic residues); sequence MSREKIWNTNSQEE. Positions 330 to 376 are enriched in acidic residues; the sequence is ELEGDEEEEEVEAEAEDDGEGDEEGEDVYSEDELEDDMYSEEEQEPS. The span at 470–481 shows a compositional bias: basic and acidic residues; sequence RAYDHPNGERYV. The segment covering 488-518 has biased composition (acidic residues); it reads PDEEEFEDEEEEYEEDDEEEYNSPDEEDTMT. Positions 547-745 form a coiled coil; sequence REKVAKERQA…ERRKKEERAA (199 aa). 2 stretches are compositionally biased toward basic and acidic residues: residues 590 to 630 and 637 to 745; these read KKEA…AEEK and QRKA…ERAA. Residues 770-780 show a composition bias toward pro residues; that stretch reads PPAPPVAPVPV. Positions 811 to 835 are enriched in low complexity; the sequence is QTSQQDGSTASSGAASNSGSMASQN. 2 stretches are compositionally biased toward polar residues: residues 865 to 877 and 983 to 1004; these read QGSA…SASP and RDNQ…QPIS. Residues 1067–1080 are compositionally biased toward pro residues; sequence GPRPAPGFPMPPFG.

The protein belongs to the NST1 family.

It localises to the cytoplasm. In terms of biological role, may act as a negative regulator of salt tolerance. This chain is Stress response protein NST1 (NST1), found in Chaetomium globosum (strain ATCC 6205 / CBS 148.51 / DSM 1962 / NBRC 6347 / NRRL 1970) (Soil fungus).